The chain runs to 262 residues: Ribosomal RNA small subunit methyltransferase A (262 aa).

Residues histidine 13, leucine 15, glycine 40, glutamate 61, aspartate 85, and asparagine 103 each coordinate S-adenosyl-L-methionine.

The protein belongs to the class I-like SAM-binding methyltransferase superfamily. rRNA adenine N(6)-methyltransferase family. RsmA subfamily.

Its subcellular location is the cytoplasm. The enzyme catalyses adenosine(1518)/adenosine(1519) in 16S rRNA + 4 S-adenosyl-L-methionine = N(6)-dimethyladenosine(1518)/N(6)-dimethyladenosine(1519) in 16S rRNA + 4 S-adenosyl-L-homocysteine + 4 H(+). Functionally, specifically dimethylates two adjacent adenosines (A1518 and A1519) in the loop of a conserved hairpin near the 3'-end of 16S rRNA in the 30S particle. May play a critical role in biogenesis of 30S subunits. The sequence is that of Ribosomal RNA small subunit methyltransferase A from Bordetella avium (strain 197N).